We begin with the raw amino-acid sequence, 330 residues long: MKYEIDAKRRTVRVVPEREEDLYFVYLLVERGDVVRGWTVREYKPEGAKEGERVKMYLAVRVESLEYHKFRGSLRIRGPVVEVQEGVEGVKGRRHTFDVVPGREIEIEKAAEFPLDVVEEILKMAQALMPKVLLVSIDDEEAAFAYITALGVELIQVVHNASKGEESLFDGYLESVRKQVDELSRRLKPDKLVVAGPAMLVEHIARYIRGDKAPQGSGGLAGVYEFIRSGLYDELKTQMGVKAYEKLIHMAATSRESVAIGPQEVEEAASLGRVDFVLVLDSYIKESPEKAWVLLSQIYKTKGRIYIVREDTEVGAGIRAMGGIAAVLRW.

This sequence belongs to the eukaryotic release factor 1 family. Pelota subfamily. In terms of assembly, monomer. A divalent metal cation is required as a cofactor.

It is found in the cytoplasm. Its function is as follows. May function in recognizing stalled ribosomes, interact with stem-loop structures in stalled mRNA molecules, and effect endonucleolytic cleavage of the mRNA. May play a role in the release non-functional ribosomes and degradation of damaged mRNAs. Has endoribonuclease activity. This chain is Protein pelota homolog, found in Pyrobaculum neutrophilum (strain DSM 2338 / JCM 9278 / NBRC 100436 / V24Sta) (Thermoproteus neutrophilus).